Reading from the N-terminus, the 278-residue chain is HTH-type transcriptional activator RhaS (278 aa).

The HTH araC/xylS-type domain maps to 174-272; that stretch reads NQLMAWLEDH…NWSPRDIRQG (99 aa). DNA-binding regions (H-T-H motif) lie at residues 191 to 212 and 239 to 262; these read EAVA…KQHT and VTEI…RREF.

Binds DNA as a dimer.

The protein resides in the cytoplasm. Activates expression of the rhaBAD and rhaT operons. The sequence is that of HTH-type transcriptional activator RhaS from Salmonella dublin (strain CT_02021853).